Consider the following 487-residue polypeptide: Phenylalanine--tRNA ligase alpha subunit (487 aa).

L-phenylalanine-binding positions include T319, 361 to 363 (QVE), and Y401. Residue E403 coordinates Mg(2+). F427 is an L-phenylalanine binding site.

Belongs to the class-II aminoacyl-tRNA synthetase family. Phe-tRNA synthetase alpha subunit type 2 subfamily. Tetramer of two alpha and two beta subunits. It depends on Mg(2+) as a cofactor.

It is found in the cytoplasm. It carries out the reaction tRNA(Phe) + L-phenylalanine + ATP = L-phenylalanyl-tRNA(Phe) + AMP + diphosphate + H(+). The protein is Phenylalanine--tRNA ligase alpha subunit (phesA) of Dictyostelium discoideum (Social amoeba).